The following is a 448-amino-acid chain: Signal recognition particle 54 kDa protein (448 aa).

GTP is bound by residues Gly-107–Thr-114, Asp-189–Arg-193, and Thr-247–Asp-250.

Belongs to the GTP-binding SRP family. SRP54 subfamily. As to quaternary structure, part of the signal recognition particle protein translocation system, which is composed of SRP and FtsY. Archaeal SRP consists of a 7S RNA molecule of 300 nucleotides and two protein subunits: SRP54 and SRP19.

The protein localises to the cytoplasm. It carries out the reaction GTP + H2O = GDP + phosphate + H(+). Functionally, involved in targeting and insertion of nascent membrane proteins into the cytoplasmic membrane. Binds to the hydrophobic signal sequence of the ribosome-nascent chain (RNC) as it emerges from the ribosomes. The SRP-RNC complex is then targeted to the cytoplasmic membrane where it interacts with the SRP receptor FtsY. The sequence is that of Signal recognition particle 54 kDa protein from Thermococcus kodakarensis (strain ATCC BAA-918 / JCM 12380 / KOD1) (Pyrococcus kodakaraensis (strain KOD1)).